A 415-amino-acid chain; its full sequence is Serine--tRNA ligase (415 aa).

231 to 233 (TAE) serves as a coordination point for L-serine. 262–264 (RSE) serves as a coordination point for ATP. Glu285 serves as a coordination point for L-serine. An ATP-binding site is contributed by 349–352 (EISS). Ser383 serves as a coordination point for L-serine.

This sequence belongs to the class-II aminoacyl-tRNA synthetase family. Type-1 seryl-tRNA synthetase subfamily. In terms of assembly, homodimer. The tRNA molecule binds across the dimer.

The protein resides in the cytoplasm. The enzyme catalyses tRNA(Ser) + L-serine + ATP = L-seryl-tRNA(Ser) + AMP + diphosphate + H(+). It catalyses the reaction tRNA(Sec) + L-serine + ATP = L-seryl-tRNA(Sec) + AMP + diphosphate + H(+). Its pathway is aminoacyl-tRNA biosynthesis; selenocysteinyl-tRNA(Sec) biosynthesis; L-seryl-tRNA(Sec) from L-serine and tRNA(Sec): step 1/1. In terms of biological role, catalyzes the attachment of serine to tRNA(Ser). Is also able to aminoacylate tRNA(Sec) with serine, to form the misacylated tRNA L-seryl-tRNA(Sec), which will be further converted into selenocysteinyl-tRNA(Sec). The chain is Serine--tRNA ligase from Helicobacter pylori (strain P12).